We begin with the raw amino-acid sequence, 797 residues long: Mitochondrial inner membrane m-AAA protease component AFG3L2 (797 aa).

Residues 1-38 constitute a mitochondrion transit peptide; sequence MAHRCLRLWGRGGCWPRGLQQLLVPGGVGPGEQPCLRT. The propeptide at 39–66 is removed in mature form; the sequence is LYRFVTTQARASRNSLLTDIIAAYQRFC. Residues 39–142 are Mitochondrial matrix-facing; that stretch reads LYRFVTTQAR…KGDIPWDDKD (104 aa). Residues 76–126 form a disordered region; the sequence is YFPNGKNGKKASEPKEVMGEKKESKPAATTRSSGGGGGGGGKRGGKKDDSH. The segment covering 85–100 has biased composition (basic and acidic residues); that stretch reads KASEPKEVMGEKKESK. Gly residues predominate over residues 108-117; the sequence is SGGGGGGGGK. K117 is subject to N6-succinyllysine. The chain crosses the membrane as a helical span at residues 143 to 163; it reads FRMFFLWTALFWGGVMFYLLL. Residues 164-250 are Mitochondrial intermembrane-facing; that stretch reads KRSGREITWK…VPVVYIAESD (87 aa). Residues 251-271 form a helical membrane-spanning segment; it reads GSFLLSMLPTVLIIAFLLYTI. At 272–797 the chain is on the mitochondrial matrix side; it reads RRGPAGIGRT…EEPPGEKVAN (526 aa). 8 residues coordinate ATP: V310, A311, T352, G353, K354, T355, L356, and H490. Zn(2+) is bound at residue H574. Residue E575 is part of the active site. Residues H578 and D649 each coordinate Zn(2+). Positions 759-797 are disordered; it reads FVEGTGSLDEDTSLPEGLKDWNKEREKEKEEPPGEKVAN. The span at 775 to 797 shows a compositional bias: basic and acidic residues; that stretch reads GLKDWNKEREKEKEEPPGEKVAN.

This sequence in the N-terminal section; belongs to the AAA ATPase family. In the C-terminal section; belongs to the peptidase M41 family. As to quaternary structure, homohexamer. Forms heterohexamers with SPG7. The m-AAA protease is either composed of homohexamers of AFG3L2 or heterohexamers of AFG3L2 and SPG7. Interacts with MAIP1. Interacts with DNAJC19. Interacts with PHB2. The cofactor is Zn(2+). In terms of processing, upon import into the mitochondrion, the N-terminal transit peptide is cleaved to generate an intermediate form which undergoes autocatalytic proteolytic processing to generate the proteolytically active mature form. In terms of tissue distribution, ubiquitous. Highly expressed in the cerebellar Purkinje cells.

The protein localises to the mitochondrion inner membrane. It catalyses the reaction ATP + H2O = ADP + phosphate + H(+). In terms of biological role, catalytic component of the m-AAA protease, a protease that plays a key role in proteostasis of inner mitochondrial membrane proteins, and which is essential for axonal and neuron development. AFG3L2 possesses both ATPase and protease activities: the ATPase activity is required to unfold substrates, threading them into the internal proteolytic cavity for hydrolysis into small peptide fragments. The m-AAA protease carries out quality control in the inner membrane of the mitochondria by mediating degradation of mistranslated or misfolded polypeptides. The m-AAA protease complex also promotes the processing and maturation of mitochondrial proteins, such as MRPL32/bL32m, PINK1 and SP7. Mediates protein maturation of the mitochondrial ribosomal subunit MRPL32/bL32m by catalyzing the cleavage of the presequence of MRPL32/bL32m prior to assembly into the mitochondrial ribosome. Required for SPG7 maturation into its active mature form after SPG7 cleavage by mitochondrial-processing peptidase (MPP). Required for the maturation of PINK1 into its 52kDa mature form after its cleavage by mitochondrial-processing peptidase (MPP). Acts as a regulator of calcium in neurons by mediating degradation of SMDT1/EMRE before its assembly with the uniporter complex, limiting the availability of SMDT1/EMRE for MCU assembly and promoting efficient assembly of gatekeeper subunits with MCU. Promotes the proteolytic degradation of GHITM upon hyperpolarization of mitochondria: progressive GHITM degradation leads to respiratory complex I degradation and broad reshaping of the mitochondrial proteome by AFG3L2. Also acts as a regulator of mitochondrial glutathione homeostasis by mediating cleavage and degradation of SLC25A39. SLC25A39 cleavage is prevented when SLC25A39 binds iron-sulfur. Involved in the regulation of OMA1-dependent processing of OPA1. May act by mediating processing of OMA1 precursor, participating in OMA1 maturation. The chain is Mitochondrial inner membrane m-AAA protease component AFG3L2 from Homo sapiens (Human).